A 483-amino-acid polypeptide reads, in one-letter code: Regulatory protein ViaA (483 aa).

It belongs to the ViaA family. In terms of assembly, homodimer. Interacts with RavA.

It localises to the cytoplasm. Its function is as follows. Component of the RavA-ViaA chaperone complex, which may act on the membrane to optimize the function of some of the respiratory chains. ViaA stimulates the ATPase activity of RavA. The protein is Regulatory protein ViaA of Salmonella paratyphi A (strain ATCC 9150 / SARB42).